Consider the following 97-residue polypeptide: Large ribosomal subunit protein eL21 (97 aa).

The disordered stretch occupies residues 1 to 24 (MQKSEGFRSKTRYKLQKHPRQKGM). The span at 9–21 (SKTRYKLQKHPRQ) shows a compositional bias: basic residues.

Belongs to the eukaryotic ribosomal protein eL21 family.

The sequence is that of Large ribosomal subunit protein eL21 from Methanococcus maripaludis (strain DSM 14266 / JCM 13030 / NBRC 101832 / S2 / LL).